Here is a 95-residue protein sequence, read N- to C-terminus: Co-chaperonin GroES (95 aa).

This sequence belongs to the GroES chaperonin family. Heptamer of 7 subunits arranged in a ring. Interacts with the chaperonin GroEL.

The protein resides in the cytoplasm. Together with the chaperonin GroEL, plays an essential role in assisting protein folding. The GroEL-GroES system forms a nano-cage that allows encapsulation of the non-native substrate proteins and provides a physical environment optimized to promote and accelerate protein folding. GroES binds to the apical surface of the GroEL ring, thereby capping the opening of the GroEL channel. In Stenotrophomonas maltophilia (strain K279a), this protein is Co-chaperonin GroES.